The chain runs to 554 residues: 2-succinyl-5-enolpyruvyl-6-hydroxy-3-cyclohexene-1-carboxylate synthase (554 aa).

This sequence belongs to the TPP enzyme family. MenD subfamily. Homodimer. Mg(2+) is required as a cofactor. Mn(2+) serves as cofactor. Requires thiamine diphosphate as cofactor.

The catalysed reaction is isochorismate + 2-oxoglutarate + H(+) = 5-enolpyruvoyl-6-hydroxy-2-succinyl-cyclohex-3-ene-1-carboxylate + CO2. It participates in quinol/quinone metabolism; 1,4-dihydroxy-2-naphthoate biosynthesis; 1,4-dihydroxy-2-naphthoate from chorismate: step 2/7. The protein operates within quinol/quinone metabolism; menaquinone biosynthesis. Functionally, catalyzes the thiamine diphosphate-dependent decarboxylation of 2-oxoglutarate and the subsequent addition of the resulting succinic semialdehyde-thiamine pyrophosphate anion to isochorismate to yield 2-succinyl-5-enolpyruvyl-6-hydroxy-3-cyclohexene-1-carboxylate (SEPHCHC). The protein is 2-succinyl-5-enolpyruvyl-6-hydroxy-3-cyclohexene-1-carboxylate synthase of Mycobacterium tuberculosis (strain ATCC 25177 / H37Ra).